Reading from the N-terminus, the 1323-residue chain is Clustered mitochondria protein homolog (1323 aa).

A TPR 1 repeat occupies 103–141; sequence KEKPYNLAAIYDHLNKFREVIGLHFLDKYSSEVGVLSGV. A disordered region spans residues 149 to 186; sequence LQDVKETEPETQDDKDKETDETKSTKEDSNQTEEKKSE. The span at 150–186 shows a compositional bias: basic and acidic residues; it reads QDVKETEPETQDDKDKETDETKSTKEDSNQTEEKKSE. One can recognise a Clu domain in the interval 351 to 608; it reads FANQPDASRS…RATPLDIEFI (258 aa). A TPR 2 repeat occupies 530-563; the sequence is CYGLSTDGSKIFSDSSFENVLKPIAEAFHLKPHP. The span at 764 to 801 shows a compositional bias: basic and acidic residues; that stretch reads NEEEISKRKEESEKKATEGKDQDKEEEKANDNEKNKED. Residues 764–808 form a disordered region; the sequence is NEEEISKRKEESEKKATEGKDQDKEEEKANDNEKNKEDDKEEVSN. 4 TPR repeats span residues 1042–1076, 1099–1132, 1141–1174, and 1183–1216; these read LSVY…KSEA, ITAY…WTLV, VNTY…STKL, and GMLR…FTKF. The tract at residues 1250–1323 is disordered; that stretch reads KALAQQASAS…KKSNNKKSKK (74 aa). The span at 1308 to 1323 shows a compositional bias: basic residues; that stretch reads PKKQLKKKSNNKKSKK.

This sequence belongs to the CLU family. In terms of assembly, may associate with the eukaryotic translation initiation factor 3 (eIF-3) complex.

The protein localises to the cytoplasm. MRNA-binding protein involved in proper cytoplasmic distribution of mitochondria. This chain is Clustered mitochondria protein homolog, found in Debaryomyces hansenii (strain ATCC 36239 / CBS 767 / BCRC 21394 / JCM 1990 / NBRC 0083 / IGC 2968) (Yeast).